The sequence spans 502 residues: MSKTQVVHYEKWQSFAGDLLVFPLGEKPEFSGDMKEIANIYNKLEATGDFSGKDGEAVLLYSSQLKKSICGAERILLLGLGKGDKDSDLQRDLLRQTGGLVAQKAAEIKATEVLVVIPTLAGRKSADTLEPLVEGVLLGDYRFLKYMSKKDAPAPYRGLKVLALSFAGAFDKALERISERAQLAADCGCAARDMAHEPGNGWTPKHFSRYAKKLAKSHSLVCTVLGKKKMKKMGMGGLLGVSQGSKESPQLVVLEYSPENPRKTVLMVGKGLTFDSGGVSLKPGAGMEEMKYDMCGGAAVICAMKAVAEEKPDVRVIAIVPATDNMAGGGALKPGDIISHYGGISSEVVNTDAEGRLILADALAYGVEKYCPDYVLDLATLTGAAIIALGHHHTALVSNSDHLVELATRAGAKAGEPVWRLPLTEEYRKQIKSEVADIKNVGGRPAGTITAAAYLEKFIGDTPWLHFDIAGTAWNFTEKKYIPKGPSGTGTRTLIEFIRSLG.

K270 and D275 together coordinate Mn(2+). K282 is an active-site residue. Positions 293, 352, and 354 each coordinate Mn(2+). R356 is an active-site residue.

Belongs to the peptidase M17 family. The cofactor is Mn(2+).

The protein localises to the cytoplasm. The catalysed reaction is Release of an N-terminal amino acid, Xaa-|-Yaa-, in which Xaa is preferably Leu, but may be other amino acids including Pro although not Arg or Lys, and Yaa may be Pro. Amino acid amides and methyl esters are also readily hydrolyzed, but rates on arylamides are exceedingly low.. It carries out the reaction Release of an N-terminal amino acid, preferentially leucine, but not glutamic or aspartic acids.. Its function is as follows. Presumably involved in the processing and regular turnover of intracellular proteins. Catalyzes the removal of unsubstituted N-terminal amino acids from various peptides. The polypeptide is Probable cytosol aminopeptidase (Desulfotalea psychrophila (strain LSv54 / DSM 12343)).